A 433-amino-acid chain; its full sequence is ATP-dependent RNA helicase SUB2 (433 aa).

A Q motif motif is present at residues 49-77 (TGFRDFLLKPELLRAIGDCGFEHPSEVQQ). A Helicase ATP-binding domain is found at 80–255 (IPQSILGTDV…KKFMQNPLEI (176 aa)). Position 93-100 (93-100 (AKSGLGKT)) interacts with ATP. A DEAD box motif is present at residues 202 to 205 (DECD). The region spanning 267–428 (GLQQYYIKLE…EFPEEGVDPS (162 aa)) is the Helicase C-terminal domain.

The protein belongs to the DEAD box helicase family. DECD subfamily.

Its subcellular location is the nucleus. It catalyses the reaction ATP + H2O = ADP + phosphate + H(+). Functionally, ATP-binding RNA helicase involved in transcription elongation and required for the export of mRNA out of the nucleus. SUB2 also plays a role in pre-mRNA splicing and spliceosome assembly. May be involved in rDNA and telomeric silencing, and maintenance of genome integrity. In Scheffersomyces stipitis (strain ATCC 58785 / CBS 6054 / NBRC 10063 / NRRL Y-11545) (Yeast), this protein is ATP-dependent RNA helicase SUB2 (SUB2).